A 347-amino-acid polypeptide reads, in one-letter code: UDP-N-acetylenolpyruvoylglucosamine reductase (347 aa).

The FAD-binding PCMH-type domain occupies 33 to 221 (AGGSAERIYL…SGAWFALPRD (189 aa)). Residue arginine 180 is part of the active site. The Proton donor role is filled by serine 250. Glutamate 320 is an active-site residue.

The protein belongs to the MurB family. Requires FAD as cofactor.

The protein localises to the cytoplasm. The enzyme catalyses UDP-N-acetyl-alpha-D-muramate + NADP(+) = UDP-N-acetyl-3-O-(1-carboxyvinyl)-alpha-D-glucosamine + NADPH + H(+). It participates in cell wall biogenesis; peptidoglycan biosynthesis. Cell wall formation. This is UDP-N-acetylenolpyruvoylglucosamine reductase from Nitrosospira multiformis (strain ATCC 25196 / NCIMB 11849 / C 71).